Consider the following 117-residue polypeptide: Large ribosomal subunit protein bL17 (117 aa).

Belongs to the bacterial ribosomal protein bL17 family. As to quaternary structure, part of the 50S ribosomal subunit. Contacts protein L32.

This chain is Large ribosomal subunit protein bL17, found in Thermomicrobium roseum (strain ATCC 27502 / DSM 5159 / P-2).